A 484-amino-acid chain; its full sequence is Sorting assembly machinery 50 kDa subunit (484 aa).

Belongs to the SAM50/omp85 family. As to quaternary structure, component of the mitochondrial outer membrane sorting assembly machinery (SAM or TOB) complex, which at least consists of SAM35, SAM37 and SAM50. Associates with the mitochondrial contact site and cristae organizing system (MICOS) complex (also known as MINOS or MitOS complex).

The protein localises to the mitochondrion outer membrane. Its function is as follows. Component of the mitochondrial outer membrane sorting assembly machinery (SAM or TOB) complex, which is required for the sorting of proteins with complicated topology, such as beta-barrel proteins, to the mitochondrial outer membrane after import by the TOM complex. This is Sorting assembly machinery 50 kDa subunit (SAM50) from Saccharomyces cerevisiae (strain ATCC 204508 / S288c) (Baker's yeast).